Reading from the N-terminus, the 270-residue chain is Tetraspanin-14 (270 aa).

Topologically, residues 1–17 (MHYYRYSNAEVSCWYKY) are cytoplasmic. A helical transmembrane segment spans residues 18–38 (LLFSYNIVFWLAGVVFLGVGL). The Extracellular portion of the chain corresponds to 39 to 61 (WAWSEKGVLSDLTKVTRLHGIDP). Residues 62–82 (VVLVLMVGVVMFTLGFAGCVG) traverse the membrane as a helical segment. Residues 83-92 (ALRENICLLK) are Cytoplasmic-facing. The chain crosses the membrane as a helical span at residues 93–113 (FFCGAIVLIFFLELAVAVLAF). Over 114–232 (LFQDWVRDRF…QALEGWLPRN (119 aa)) the chain is Extracellular. Residues 114-232 (LFQDWVRDRF…QALEGWLPRN (119 aa)) are necessary and sufficient for interaction with ADAM10. Disulfide bonds link cysteine 153–cysteine 221, cysteine 154–cysteine 186, cysteine 170–cysteine 180, and cysteine 187–cysteine 200. Asparagine 169 is a glycosylation site (N-linked (GlcNAc...) asparagine). A helical transmembrane segment spans residues 233–253 (IYIVAGVFIAISLLQIFGIFL). The Cytoplasmic segment spans residues 254 to 270 (ARTLISDIEAVKAGHHF).

Belongs to the tetraspanin (TM4SF) family. In terms of assembly, interacts with ADAM10; the interaction promotes ADAM10 maturation and cell surface expression.

It is found in the cell membrane. Part of TspanC8 subgroup, composed of 6 members that interact with the transmembrane metalloprotease ADAM10. This interaction is required for ADAM10 exit from the endoplasmic reticulum and for enzymatic maturation and trafficking to the cell surface as well as substrate specificity. Different TspanC8/ADAM10 complexes have distinct substrates. Negatively regulates ADAM10-mediated cleavage of GP6. Promotes ADAM10-mediated cleavage of CDH5. The protein is Tetraspanin-14 (Tspan14) of Mus musculus (Mouse).